A 945-amino-acid polypeptide reads, in one-letter code: Isoleucine--tRNA ligase (945 aa).

The short motif at 66-76 (PYANGDIHLGH) is the 'HIGH' region element. Glutamate 581 contributes to the L-isoleucyl-5'-AMP binding site. A 'KMSKS' region motif is present at residues 622 to 626 (KMSKS). Residue lysine 625 participates in ATP binding. Zn(2+) contacts are provided by cysteine 908, cysteine 911, cysteine 928, and cysteine 931.

It belongs to the class-I aminoacyl-tRNA synthetase family. IleS type 1 subfamily. As to quaternary structure, monomer. Requires Zn(2+) as cofactor.

The protein resides in the cytoplasm. The catalysed reaction is tRNA(Ile) + L-isoleucine + ATP = L-isoleucyl-tRNA(Ile) + AMP + diphosphate. Functionally, catalyzes the attachment of isoleucine to tRNA(Ile). As IleRS can inadvertently accommodate and process structurally similar amino acids such as valine, to avoid such errors it has two additional distinct tRNA(Ile)-dependent editing activities. One activity is designated as 'pretransfer' editing and involves the hydrolysis of activated Val-AMP. The other activity is designated 'posttransfer' editing and involves deacylation of mischarged Val-tRNA(Ile). The chain is Isoleucine--tRNA ligase from Burkholderia ambifaria (strain ATCC BAA-244 / DSM 16087 / CCUG 44356 / LMG 19182 / AMMD) (Burkholderia cepacia (strain AMMD)).